The primary structure comprises 119 residues: Flagellar transcriptional regulator FlhD (119 aa).

Belongs to the FlhD family. Homodimer; disulfide-linked. Forms a heterohexamer composed of two FlhC and four FlhD subunits. Each FlhC binds a FlhD dimer, forming a heterotrimer, and a hexamer assembles by dimerization of two heterotrimers.

It is found in the cytoplasm. Its function is as follows. Functions in complex with FlhC as a master transcriptional regulator that regulates transcription of several flagellar and non-flagellar operons by binding to their promoter region. Activates expression of class 2 flagellar genes, including fliA, which is a flagellum-specific sigma factor that turns on the class 3 genes. Also regulates genes whose products function in a variety of physiological pathways. In Escherichia fergusonii (strain ATCC 35469 / DSM 13698 / CCUG 18766 / IAM 14443 / JCM 21226 / LMG 7866 / NBRC 102419 / NCTC 12128 / CDC 0568-73), this protein is Flagellar transcriptional regulator FlhD.